We begin with the raw amino-acid sequence, 73 residues long: Putative antitoxin VapB16 (73 aa).

Belongs to the UPF0330 family.

Possibly the antitoxin component of a type II toxin-antitoxin (TA) system. Its cognate toxin is VapC16 (Potential). This chain is Putative antitoxin VapB16 (vapB16), found in Archaeoglobus fulgidus (strain ATCC 49558 / DSM 4304 / JCM 9628 / NBRC 100126 / VC-16).